The sequence spans 1673 residues: Protein TIC 214 (1673 aa).

Helical transmembrane passes span alanine 32–isoleucine 52, leucine 70–phenylalanine 90, proline 93–leucine 113, leucine 130–phenylalanine 150, methionine 170–cysteine 190, and phenylalanine 218–leucine 238. Basic and acidic residues-rich tracts occupy residues leucine 264–threonine 276 and serine 283–glutamate 298. Disordered stretches follow at residues leucine 264–glutamate 302, valine 547–arginine 611, asparagine 1120–leucine 1146, and glutamine 1370–aspartate 1433. Over residues aspartate 562–proline 586 the composition is skewed to polar residues. Over residues threonine 597 to arginine 611 the composition is skewed to basic and acidic residues. The span at asparagine 1120–leucine 1135 shows a compositional bias: polar residues. The span at glutamine 1370–asparagine 1379 shows a compositional bias: low complexity. 2 stretches are compositionally biased toward basic and acidic residues: residues threonine 1380–glutamate 1399 and threonine 1406–glutamate 1423.

Belongs to the TIC214 family. As to quaternary structure, part of the Tic complex.

It localises to the plastid. The protein resides in the chloroplast inner membrane. Functionally, involved in protein precursor import into chloroplasts. May be part of an intermediate translocation complex acting as a protein-conducting channel at the inner envelope. The polypeptide is Protein TIC 214 (Cuscuta gronovii (Common dodder)).